Consider the following 109-residue polypeptide: Nucleoid-associated protein SG0690 (109 aa).

The interval 1 to 23 (MFGKGGMGNLMKQAQQMQEKMQR) is disordered.

This sequence belongs to the YbaB/EbfC family. Homodimer.

It localises to the cytoplasm. It is found in the nucleoid. Functionally, binds to DNA and alters its conformation. May be involved in regulation of gene expression, nucleoid organization and DNA protection. This chain is Nucleoid-associated protein SG0690, found in Sodalis glossinidius (strain morsitans).